The following is a 246-amino-acid chain: tRNA pseudouridine synthase B (246 aa).

Residue Asp-44 is the Nucleophile of the active site.

Belongs to the pseudouridine synthase TruB family. Type 1 subfamily.

It carries out the reaction uridine(55) in tRNA = pseudouridine(55) in tRNA. Its function is as follows. Responsible for synthesis of pseudouridine from uracil-55 in the psi GC loop of transfer RNAs. This is tRNA pseudouridine synthase B from Desulfotalea psychrophila (strain LSv54 / DSM 12343).